The primary structure comprises 239 residues: 1-(5-phosphoribosyl)-5-[(5-phosphoribosylamino)methylideneamino] imidazole-4-carboxamide isomerase (239 aa).

The active-site Proton acceptor is Asp-8. Asp-129 (proton donor) is an active-site residue.

This sequence belongs to the HisA/HisF family.

It is found in the cytoplasm. It catalyses the reaction 1-(5-phospho-beta-D-ribosyl)-5-[(5-phospho-beta-D-ribosylamino)methylideneamino]imidazole-4-carboxamide = 5-[(5-phospho-1-deoxy-D-ribulos-1-ylimino)methylamino]-1-(5-phospho-beta-D-ribosyl)imidazole-4-carboxamide. Its pathway is amino-acid biosynthesis; L-histidine biosynthesis; L-histidine from 5-phospho-alpha-D-ribose 1-diphosphate: step 4/9. The sequence is that of 1-(5-phosphoribosyl)-5-[(5-phosphoribosylamino)methylideneamino] imidazole-4-carboxamide isomerase from Bacillus anthracis (strain A0248).